The primary structure comprises 501 residues: Zinc finger protein PLAG1 (501 aa).

Positions 1-30 (MATVIPGDLSEVRDTQKVPSGKRKRGETKP) are disordered. The Nuclear localization signal signature appears at 22 to 25 (KRKR). 7 C2H2-type zinc fingers span residues 34-56 (FPCQLCDKAFNSVEKLKVHSYSH), 62-86 (YKCTQQDCTKAFVSKYKLLRHMATH), 92-114 (HKCNYCEKMFHRKDHLKNHLHTH), 121-143 (FKCEECGKNYNTKLGFKRHLALH), 150-172 (LTCKVCLQTFESTGVLLEHLKTH), 185-207 (HQCEHCDRRFYTRKDVRRHMVVH), and 213-236 (FLCQYCAQRFGRKDHLTRHMKKSH). 2 stretches are compositionally biased toward low complexity: residues 366 to 380 (SGMPSSSQDSQASSS) and 455 to 467 (TQLPPQTQDPQDP). 2 disordered regions span residues 366 to 406 (SGMP…GSVP) and 447 to 474 (QEEAHSSMTQLPPQTQDPQDPSNSIGLG).

Belongs to the krueppel C2H2-type zinc-finger protein family. In terms of tissue distribution, expressed in nephroblastoma.

The protein localises to the nucleus. Transcription factor and proto-oncogene whose activation results in up-regulation of target genes, such as IGFII, leading to uncontrolled cell proliferation. The protein is Zinc finger protein PLAG1 (PLAG1) of Gallus gallus (Chicken).